The primary structure comprises 203 residues: Imidazoleglycerol-phosphate dehydratase (203 aa).

Belongs to the imidazoleglycerol-phosphate dehydratase family.

The protein localises to the cytoplasm. It carries out the reaction D-erythro-1-(imidazol-4-yl)glycerol 3-phosphate = 3-(imidazol-4-yl)-2-oxopropyl phosphate + H2O. Its pathway is amino-acid biosynthesis; L-histidine biosynthesis; L-histidine from 5-phospho-alpha-D-ribose 1-diphosphate: step 6/9. The polypeptide is Imidazoleglycerol-phosphate dehydratase (Helicobacter hepaticus (strain ATCC 51449 / 3B1)).